Here is a 376-residue protein sequence, read N- to C-terminus: Putative glutamate--cysteine ligase 2-1 (376 aa).

This sequence belongs to the glutamate--cysteine ligase type 2 family. YbdK subfamily.

The catalysed reaction is L-cysteine + L-glutamate + ATP = gamma-L-glutamyl-L-cysteine + ADP + phosphate + H(+). Functionally, ATP-dependent carboxylate-amine ligase which exhibits weak glutamate--cysteine ligase activity. The chain is Putative glutamate--cysteine ligase 2-1 from Rubrobacter xylanophilus (strain DSM 9941 / JCM 11954 / NBRC 16129 / PRD-1).